A 329-amino-acid chain; its full sequence is Fructose-1,6-bisphosphatase class 1 (329 aa).

Mg(2+) is bound by residues E84, D103, L105, and D106. Substrate-binding positions include 106–109 (DGSS), N196, and K262. A Mg(2+)-binding site is contributed by E268.

This sequence belongs to the FBPase class 1 family. In terms of assembly, homotetramer. The cofactor is Mg(2+).

The protein localises to the cytoplasm. The enzyme catalyses beta-D-fructose 1,6-bisphosphate + H2O = beta-D-fructose 6-phosphate + phosphate. It functions in the pathway carbohydrate biosynthesis; gluconeogenesis. This is Fructose-1,6-bisphosphatase class 1 from Shewanella pealeana (strain ATCC 700345 / ANG-SQ1).